Consider the following 359-residue polypeptide: DNA integrity scanning protein DisA (359 aa).

A DAC domain is found at 10–148 (ELDLLDIVQF…GNRRYTLKDI (139 aa)). Residues Gly-77, Leu-95, and 108 to 112 (MRHRT) contribute to the ATP site.

The protein belongs to the DisA family. In terms of assembly, homooctamer. Mg(2+) serves as cofactor.

It carries out the reaction 2 ATP = 3',3'-c-di-AMP + 2 diphosphate. Functionally, participates in a DNA-damage check-point that is active prior to asymmetric division when DNA is damaged. DisA forms globular foci that rapidly scan along the chromosomes during sporulation, searching for lesions. When a lesion is present, DisA pauses at the lesion site. This triggers a cellular response that culminates in a temporary block in sporulation initiation. In terms of biological role, also has diadenylate cyclase activity, catalyzing the condensation of 2 ATP molecules into cyclic di-AMP (c-di-AMP). c-di-AMP acts as a signaling molecule that couples DNA integrity with progression of sporulation. The rise in c-di-AMP level generated by DisA while scanning the chromosome, operates as a positive signal that advances sporulation; upon encountering a lesion, the DisA focus arrests at the damaged site and halts c-di-AMP synthesis. The chain is DNA integrity scanning protein DisA from Bacillus pumilus (strain SAFR-032).